We begin with the raw amino-acid sequence, 510 residues long: 2,3-bisphosphoglycerate-independent phosphoglycerate mutase (510 aa).

Positions 14 and 64 each coordinate Mn(2+). S64 functions as the Phosphoserine intermediate in the catalytic mechanism. Substrate contacts are provided by residues H125, 155–156, R187, R193, 259–262, and K332; these read RD and RADR. Mn(2+) contacts are provided by D399, H403, D440, H441, and H459.

The protein belongs to the BPG-independent phosphoglycerate mutase family. Monomer. The cofactor is Mn(2+).

It carries out the reaction (2R)-2-phosphoglycerate = (2R)-3-phosphoglycerate. It functions in the pathway carbohydrate degradation; glycolysis; pyruvate from D-glyceraldehyde 3-phosphate: step 3/5. Catalyzes the interconversion of 2-phosphoglycerate and 3-phosphoglycerate. This Pseudomonas savastanoi pv. phaseolicola (strain 1448A / Race 6) (Pseudomonas syringae pv. phaseolicola (strain 1448A / Race 6)) protein is 2,3-bisphosphoglycerate-independent phosphoglycerate mutase.